A 948-amino-acid chain; its full sequence is Receptor-like protein 45 (948 aa).

The N-terminal stretch at 1 to 26 is a signal peptide; that stretch reads MSSSKLMDFGLTWIIMMMILLQGCRS. The Extracellular portion of the chain corresponds to 27–897; the sequence is CIESERQGLL…EDDDESGLLD (871 aa). N-linked (GlcNAc...) asparagine glycans are attached at residues Asn-99 and Asn-113. 2 LRR repeats span residues 106–129 and 135–162; these read FEEL…RKGG and LRNL…AVSL. An LRR 3; degenerate repeat occupies 163–183; it reads KTLILHDNLFKGGFPVQELIN. N-linked (GlcNAc...) asparagine glycosylation occurs at Asn-183. LRR repeat units follow at residues 184–208, 210–233, 234–257, 258–284, 286–306, 307–332, 334–357, 358–381, 382–404, 405–429, 430–453, 454–477, 479–502, 503–526, 527–549, 550–573, 575–595, 596–618, 619–640, 642–665, 666–689, 758–782, 783–805, 807–831, and 833–855; these read LTSL…ELTN, RNLR…GICR, LEQL…CFSR, FSKL…DFKS, EYLS…LITE, LTEL…VSGG, QSQL…LWYQ, QELR…LLEN, NTEL…PRTM, RRLQ…GLIL, ASLR…MARM, ENIE…LFTG, YSLS…SSDE, TSLI…LLNL, RMLS…WLGN, FFLE…LFNI, YLWL…LRSS, SDYG…DTLW, YGLR…LFRS, PSIS…LCGL, SNVR…VTNL, LNQM…LGDL, KRVR…SFSN, RSIE…TLLQ, and LVVF…QFNT. Asn-328 carries an N-linked (GlcNAc...) asparagine glycan. Asn-381 and Asn-392 each carry an N-linked (GlcNAc...) asparagine glycan. Residues Asn-436 and Asn-465 are each glycosylated (N-linked (GlcNAc...) asparagine). N-linked (GlcNAc...) asparagine glycosylation is present at Asn-608. N-linked (GlcNAc...) asparagine glycans are attached at residues Asn-653, Asn-679, and Asn-688. A glycan (N-linked (GlcNAc...) asparagine) is linked at Asn-789. N-linked (GlcNAc...) asparagine glycans are attached at residues Asn-837 and Asn-842. The helical transmembrane segment at 898 to 918 threads the bilayer; sequence IVVLWWSLGTTYVTVMMGFLV. Residues 919–948 are Cytoplasmic-facing; it reads FLCFDSPWRRAWFCLVDTFIDRVKDVLGVI.

The protein belongs to the RLP family.

Its subcellular location is the cell membrane. The chain is Receptor-like protein 45 from Arabidopsis thaliana (Mouse-ear cress).